The following is a 553-amino-acid chain: ATP synthase F(1) complex subunit alpha, mitochondrial (553 aa).

Residues 1 to 43 (MLSVRVAAAVARALPRRAGLVSKNALGSSFVGARNLHASNTRL) constitute a mitochondrion transit peptide. Residues Ser-53 and Ser-65 each carry the phosphoserine modification. Ser-76 carries the phosphoserine; alternate modification. A glycan (O-linked (GlcNAc) serine; alternate) is linked at Ser-76. Ser-106 carries the post-translational modification Phosphoserine. 3 positions are modified to N6-acetyllysine: Lys-123, Lys-126, and Lys-132. Thr-134 is modified (phosphothreonine). Lys-161 is subject to N6-acetyllysine; alternate. An N6-succinyllysine; alternate modification is found at Lys-161. Phosphoserine is present on Ser-166. Lys-167 carries the post-translational modification N6-acetyllysine; alternate. Lys-167 bears the N6-succinyllysine; alternate mark. Ser-184 carries the phosphoserine modification. Omega-N-methylarginine is present on Arg-204. ATP is bound by residues Gln-215, Gly-217, Lys-218, Thr-219, and Ser-220. Mg(2+) is bound at residue Thr-219. Residues Lys-230 and Lys-239 each carry the N6-acetyllysine; alternate modification. An N6-succinyllysine; alternate mark is found at Lys-230 and Lys-239. Position 240 is an N6-acetyllysine (Lys-240). An N6-acetyllysine; alternate mark is found at Lys-261 and Lys-305. An N6-succinyllysine; alternate mark is found at Lys-261 and Lys-305. Asp-312 serves as a coordination point for Mg(2+). The residue at position 427 (Lys-427) is an N6-acetyllysine; alternate. Lys-427 carries the post-translational modification N6-succinyllysine; alternate. Position 434 is an N6-acetyllysine (Lys-434). Gln-473 and Gln-475 together coordinate ATP. 2 positions are modified to N6-acetyllysine; alternate: Lys-498 and Lys-506. Residues Lys-498 and Lys-506 each carry the N6-succinyllysine; alternate modification. At Ser-521 the chain carries Phosphoserine. Residues Lys-531 and Lys-539 each carry the N6-acetyllysine; alternate modification. N6-succinyllysine; alternate occurs at positions 531 and 539. An N6-acetyllysine modification is found at Lys-541.

The protein belongs to the ATPase alpha/beta chains family. In terms of assembly, homotrimer. Component of the ATP synthase complex composed at least of ATP5F1A/subunit alpha, ATP5F1B/subunit beta, ATP5MC1/subunit c (homooctomer), MT-ATP6/subunit a, MT-ATP8/subunit 8, ATP5ME/subunit e, ATP5MF/subunit f, ATP5MG/subunit g, ATP5MK/subunit k, ATP5MJ/subunit j, ATP5F1C/subunit gamma, ATP5F1D/subunit delta, ATP5F1E/subunit epsilon, ATP5PF/subunit F6, ATP5PB/subunit b, ATP5PD/subunit d, ATP5PO/subunit OSCP. ATP synthase complex consists of a soluble F(1) head domain (subunits alpha(3) and beta(3)) - the catalytic core - and a membrane F(0) domain - the membrane proton channel (subunits c, a, 8, e, f, g, k and j). These two domains are linked by a central stalk (subunits gamma, delta, and epsilon) rotating inside the F1 region and a stationary peripheral stalk (subunits F6, b, d, and OSCP). Interacts with ATPAF2. Interacts with HRG; the interaction occurs on the surface of T-cells and alters the cell morphology when associated with concanavalin (in vitro). Interacts with PLG (angiostatin peptide); the interaction inhibits most of the angiogenic properties of angiostatin. Interacts with BLOC1S1. Interacts with BCL2L1 isoform BCL-X(L); the interaction mediates the association of BCL2L1 isoform BCL-X(L) with the mitochondrial membrane F(1)F(0) ATP synthase and enhances neurons metabolic efficiency. Interacts with CLN5 and PPT1. Interacts with S100A1; this interaction increases F1-ATPase activity. Interacts with ABCB7; this interaction allows the regulation of cellular iron homeostasis and cellular reactive oxygen species (ROS) levels in cardiomyocytes. Post-translationally, acetylated on lysine residues. BLOC1S1 is required for acetylation. Acetylation of Lys-132, Lys-230 and Lys-498 is observed in liver mitochondria from fasted mice but not from fed mice.

Its subcellular location is the mitochondrion inner membrane. The protein resides in the cell membrane. Its function is as follows. Subunit alpha, of the mitochondrial membrane ATP synthase complex (F(1)F(0) ATP synthase or Complex V) that produces ATP from ADP in the presence of a proton gradient across the membrane which is generated by electron transport complexes of the respiratory chain. ATP synthase complex consist of a soluble F(1) head domain - the catalytic core - and a membrane F(1) domain - the membrane proton channel. These two domains are linked by a central stalk rotating inside the F(1) region and a stationary peripheral stalk. During catalysis, ATP synthesis in the catalytic domain of F(1) is coupled via a rotary mechanism of the central stalk subunits to proton translocation. In vivo, can only synthesize ATP although its ATP hydrolase activity can be activated artificially in vitro. With the catalytic subunit beta (ATP5F1B), forms the catalytic core in the F(1) domain. Subunit alpha does not bear the catalytic high-affinity ATP-binding sites. The chain is ATP synthase F(1) complex subunit alpha, mitochondrial from Mus musculus (Mouse).